We begin with the raw amino-acid sequence, 337 residues long: Glyceraldehyde-3-phosphate dehydrogenase (337 aa).

Residues 12–13 (RI), Asp-34, and Lys-79 contribute to the NAD(+) site. D-glyceraldehyde 3-phosphate is bound by residues 150 to 152 (SCT), Thr-181, 210 to 211 (TG), and Arg-233. Cys-151 serves as the catalytic Nucleophile. Asn-315 contacts NAD(+).

It belongs to the glyceraldehyde-3-phosphate dehydrogenase family. As to quaternary structure, homotetramer.

The protein localises to the cytoplasm. It catalyses the reaction D-glyceraldehyde 3-phosphate + phosphate + NAD(+) = (2R)-3-phospho-glyceroyl phosphate + NADH + H(+). Its pathway is carbohydrate degradation; glycolysis; pyruvate from D-glyceraldehyde 3-phosphate: step 1/5. In Phaeosphaeria nodorum (strain SN15 / ATCC MYA-4574 / FGSC 10173) (Glume blotch fungus), this protein is Glyceraldehyde-3-phosphate dehydrogenase (GPD1).